Here is an 81-residue protein sequence, read N- to C-terminus: Sulfur carrier protein TusA (81 aa).

C19 functions as the Cysteine persulfide intermediate in the catalytic mechanism.

It belongs to the sulfur carrier protein TusA family.

The protein resides in the cytoplasm. Its function is as follows. Sulfur carrier protein which probably makes part of a sulfur-relay system. This chain is Sulfur carrier protein TusA, found in Shewanella sediminis (strain HAW-EB3).